The chain runs to 130 residues: Small ribosomal subunit protein uS11 (130 aa).

It belongs to the universal ribosomal protein uS11 family. As to quaternary structure, part of the 30S ribosomal subunit. Interacts with proteins S7 and S18. Binds to IF-3.

Its function is as follows. Located on the platform of the 30S subunit, it bridges several disparate RNA helices of the 16S rRNA. Forms part of the Shine-Dalgarno cleft in the 70S ribosome. The chain is Small ribosomal subunit protein uS11 from Borreliella afzelii (strain PKo) (Borrelia afzelii).